The sequence spans 336 residues: Fructose-1,6-bisphosphatase class 1 (336 aa).

Residues glutamate 90, aspartate 112, leucine 114, and aspartate 115 each coordinate Mg(2+). Substrate is bound by residues 115-118 (DGSS), asparagine 211, and lysine 277. Glutamate 283 lines the Mg(2+) pocket.

The protein belongs to the FBPase class 1 family. In terms of assembly, homotetramer. It depends on Mg(2+) as a cofactor.

Its subcellular location is the cytoplasm. It carries out the reaction beta-D-fructose 1,6-bisphosphate + H2O = beta-D-fructose 6-phosphate + phosphate. It participates in carbohydrate biosynthesis; gluconeogenesis. The chain is Fructose-1,6-bisphosphatase class 1 from Pseudomonas entomophila (strain L48).